The sequence spans 457 residues: tRNA modification GTPase MnmE (457 aa).

(6S)-5-formyl-5,6,7,8-tetrahydrofolate is bound by residues Arg25, Glu87, and Arg126. One can recognise a TrmE-type G domain in the interval 223–377 (GISTAIIGRP…IEERINQLFF (155 aa)). Asn233 is a K(+) binding site. Residues 233 to 238 (NVGKSS), 252 to 258 (TDIAGTT), and 277 to 280 (DTAG) each bind GTP. Ser237 is a binding site for Mg(2+). K(+) contacts are provided by Thr252, Ile254, and Thr257. Mg(2+) is bound at residue Thr258. Residue Lys457 coordinates (6S)-5-formyl-5,6,7,8-tetrahydrofolate.

Belongs to the TRAFAC class TrmE-Era-EngA-EngB-Septin-like GTPase superfamily. TrmE GTPase family. Homodimer. Heterotetramer of two MnmE and two MnmG subunits. K(+) is required as a cofactor.

It localises to the cytoplasm. Exhibits a very high intrinsic GTPase hydrolysis rate. Involved in the addition of a carboxymethylaminomethyl (cmnm) group at the wobble position (U34) of certain tRNAs, forming tRNA-cmnm(5)s(2)U34. This chain is tRNA modification GTPase MnmE, found in Streptococcus gordonii (strain Challis / ATCC 35105 / BCRC 15272 / CH1 / DL1 / V288).